A 483-amino-acid chain; its full sequence is Probable Xaa-Pro aminopeptidase MCYG_06503 (483 aa).

The Mn(2+) site is built by aspartate 233, aspartate 244, glutamate 409, and glutamate 453.

Belongs to the peptidase M24B family. It depends on Mn(2+) as a cofactor.

The catalysed reaction is Release of any N-terminal amino acid, including proline, that is linked to proline, even from a dipeptide or tripeptide.. Catalyzes the removal of a penultimate prolyl residue from the N-termini of peptides. This chain is Probable Xaa-Pro aminopeptidase MCYG_06503, found in Arthroderma otae (strain ATCC MYA-4605 / CBS 113480) (Microsporum canis).